Reading from the N-terminus, the 238-residue chain is SPbeta prophage-derived uncharacterized protein YorM (238 aa).

Positions 1-37 (MFKKLIDKHKKYVYHRINKMALFATIGLLGVGLVYSA) are cleaved as a signal peptide. The span at 111–121 (TKTKKVQKTNT) shows a compositional bias: basic residues. The tract at residues 111-132 (TKTKKVQKTNTKRNLDKAVSKS) is disordered.

The chain is SPbeta prophage-derived uncharacterized protein YorM (yorM) from Bacillus subtilis (strain 168).